The sequence spans 416 residues: Queuine tRNA-ribosyltransferase accessory subunit 2 (416 aa).

C350, C352, C355, and H381 together coordinate Zn(2+).

It belongs to the queuine tRNA-ribosyltransferase family. QTRT2 subfamily. Heterodimer of a catalytic subunit qtrt1 and an accessory subunit qtrt2. Requires Zn(2+) as cofactor.

It is found in the cytoplasm. It localises to the mitochondrion outer membrane. Functionally, non-catalytic subunit of the queuine tRNA-ribosyltransferase (TGT) that catalyzes the base-exchange of a guanine (G) residue with queuine (Q) at position 34 (anticodon wobble position) in tRNAs with GU(N) anticodons (tRNA-Asp, -Asn, -His and -Tyr), resulting in the hypermodified nucleoside queuosine (7-(((4,5-cis-dihydroxy-2-cyclopenten-1-yl)amino)methyl)-7-deazaguanosine). The chain is Queuine tRNA-ribosyltransferase accessory subunit 2 from Danio rerio (Zebrafish).